The primary structure comprises 108 residues: Thiosulfate sulfurtransferase GlpE (108 aa).

The 89-residue stretch at glutamate 18–threonine 106 folds into the Rhodanese domain. Cysteine 66 (cysteine persulfide intermediate) is an active-site residue.

Belongs to the GlpE family.

Its subcellular location is the cytoplasm. It catalyses the reaction thiosulfate + hydrogen cyanide = thiocyanate + sulfite + 2 H(+). The catalysed reaction is thiosulfate + [thioredoxin]-dithiol = [thioredoxin]-disulfide + hydrogen sulfide + sulfite + 2 H(+). Functionally, transferase that catalyzes the transfer of sulfur from thiosulfate to thiophilic acceptors such as cyanide or dithiols. May function in a CysM-independent thiosulfate assimilation pathway by catalyzing the conversion of thiosulfate to sulfite, which can then be used for L-cysteine biosynthesis. This is Thiosulfate sulfurtransferase GlpE from Actinobacillus pleuropneumoniae serotype 5b (strain L20).